Consider the following 2543-residue polypeptide: Polyketide synthase PksR (2543 aa).

The segment at 165-269 is methyltransferase; the sequence is LEIGAGTGGT…KAVLKKNGLL (105 aa). One can recognise a Carrier 1 domain in the interval 376–452; that stretch reads SLIEQTAQFV…ELVEYLVKGH (77 aa). O-(pantetheine 4'-phosphoryl)serine is present on Ser-413. The disordered stretch occupies residues 465–485; it reads TKPAKNEAPLQTERTDPNKPF. Residues 527 to 959 form the Ketosynthase family 3 (KS3) 1 domain; sequence TEDIAIIGVS…GAYANLIIEE (433 aa). Cys-700 acts as the For beta-ketoacyl synthase 1 activity in catalysis. An N-terminal hotdog fold region spans residues 1114–1242; that stretch reads HFDVSSINEK…GQCGIGSFEP (129 aa). The region spanning 1114–1397 is the PKS/mFAS DH domain; the sequence is HFDVSSINEK…LKQLRISNQR (284 aa). Positions 1255–1397 are C-terminal hotdog fold; sequence TKLHHIDQMY…LKQLRISNQR (143 aa). The region spanning 1407 to 1485 is the Carrier 2 domain; it reads SNLKARIRSY…ELIDFFADKH (79 aa). Residue Ser-1445 is modified to O-(pantetheine 4'-phosphoryl)serine. The Ketosynthase family 3 (KS3) 2 domain occupies 1528-1946; that stretch reads ADGIAIIGMS…GVNAHVILEE (419 aa). Active-site for beta-ketoacyl synthase 2 activity residues include Cys-1680, His-1815, and His-1862. The region spanning 2134-2208 is the Carrier 3 domain; sequence RINNSSDHHI…DMMDLIAKKQ (75 aa). Ser-2168 carries the post-translational modification O-(pantetheine 4'-phosphoryl)serine. The interval 2234 to 2514 is thioesterase; that stretch reads RPVFWFHGGV…EFCEKLYSNR (281 aa).

Pantetheine 4'-phosphate is required as a cofactor.

Its subcellular location is the cytoplasm. It functions in the pathway antibiotic biosynthesis; bacillaene biosynthesis. In terms of biological role, involved in some intermediate steps for the synthesis of the antibiotic polyketide bacillaene which is involved in secondary metabolism. The polypeptide is Polyketide synthase PksR (pksR) (Bacillus subtilis (strain 168)).